Here is a 345-residue protein sequence, read N- to C-terminus: MAKVYHDSSADLSIIRGKKVGIVGYGSQGHAHALNLVDSGVQVRVGLRPSSSSKAKAEKSGLQVGSVSDVAQWADVIMILAPDTEQAAIYEKDIAPHLKPGKTLMFAHGFNIRYGTITPPEGIDVSMVAPKAPGHRVREVFTEGGGTPALFAIHQDASGKAREIALSYAAAIGTTRAGVLETTFKEETETDLFGEQAVLCGGAAALVKAGFETLVEAGYQPELAYFECLHELKLIVDLMYRGGLNYMRYSVSDTAEYGDYIAGPRIITDETRKNMKQLLTDIQDGTFAKNWINENKTGRPWFEKKRTDEQEQQLEDVGAQLRDMMTFLNPVKIKQKSEQKEAVAQ.

Positions Ala2–Thr182 constitute a KARI N-terminal Rossmann domain. Residues Tyr25–Gln28, Arg48, Ser51, Ser53, and Asp83–Gln86 contribute to the NADP(+) site. His108 is an active-site residue. Gly134 lines the NADP(+) pocket. The KARI C-terminal knotted domain maps to Thr183–Leu328. Mg(2+) is bound by residues Asp191, Glu195, Glu227, and Glu231. Residue Ser252 coordinates substrate.

The protein belongs to the ketol-acid reductoisomerase family. Mg(2+) is required as a cofactor.

It carries out the reaction (2R)-2,3-dihydroxy-3-methylbutanoate + NADP(+) = (2S)-2-acetolactate + NADPH + H(+). It catalyses the reaction (2R,3R)-2,3-dihydroxy-3-methylpentanoate + NADP(+) = (S)-2-ethyl-2-hydroxy-3-oxobutanoate + NADPH + H(+). The protein operates within amino-acid biosynthesis; L-isoleucine biosynthesis; L-isoleucine from 2-oxobutanoate: step 2/4. Its pathway is amino-acid biosynthesis; L-valine biosynthesis; L-valine from pyruvate: step 2/4. Involved in the biosynthesis of branched-chain amino acids (BCAA). Catalyzes an alkyl-migration followed by a ketol-acid reduction of (S)-2-acetolactate (S2AL) to yield (R)-2,3-dihydroxy-isovalerate. In the isomerase reaction, S2AL is rearranged via a Mg-dependent methyl migration to produce 3-hydroxy-3-methyl-2-ketobutyrate (HMKB). In the reductase reaction, this 2-ketoacid undergoes a metal-dependent reduction by NADPH to yield (R)-2,3-dihydroxy-isovalerate. The chain is Ketol-acid reductoisomerase (NADP(+)) from Koribacter versatilis (strain Ellin345).